The primary structure comprises 336 residues: Dihydroorotate dehydrogenase (quinone) (336 aa).

Residues alanine 62–lysine 66 and threonine 86 contribute to the FMN site. Lysine 66 provides a ligand contact to substrate. Asparagine 111–phenylalanine 115 is a binding site for substrate. FMN-binding residues include asparagine 139 and asparagine 172. A substrate-binding site is contributed by asparagine 172. The active-site Nucleophile is serine 175. Asparagine 177 contributes to the substrate binding site. 2 residues coordinate FMN: lysine 217 and threonine 245. Asparagine 246–threonine 247 is a binding site for substrate. FMN contacts are provided by residues glycine 268, glycine 297, and phenylalanine 318–serine 319.

This sequence belongs to the dihydroorotate dehydrogenase family. Type 2 subfamily. In terms of assembly, monomer. It depends on FMN as a cofactor.

The protein resides in the cell membrane. The catalysed reaction is (S)-dihydroorotate + a quinone = orotate + a quinol. It functions in the pathway pyrimidine metabolism; UMP biosynthesis via de novo pathway; orotate from (S)-dihydroorotate (quinone route): step 1/1. Its function is as follows. Catalyzes the conversion of dihydroorotate to orotate with quinone as electron acceptor. In Photorhabdus laumondii subsp. laumondii (strain DSM 15139 / CIP 105565 / TT01) (Photorhabdus luminescens subsp. laumondii), this protein is Dihydroorotate dehydrogenase (quinone).